A 1704-amino-acid polypeptide reads, in one-letter code: Phospholipid-transporting ATPase ABCA3 (1704 aa).

N-linked (GlcNAc...) asparagine glycosylation is present at N14. Residues 22–42 form a helical membrane-spanning segment; that stretch reads VLVTVLELFLPLLFSGILIWL. N-linked (GlcNAc...) asparagine glycans are attached at residues N53, N124, N140, and N228. Transmembrane regions (helical) follow at residues 261 to 283, 307 to 327, 344 to 364, 373 to 393, 405 to 425, and 447 to 467; these read YQLPLLLMLSFTYTSLTIIRAVV, AWFLMFFLFFLIVVSFMTLLF, SLVLAFLLCFAISSISFSFMV, IAAAVGGFLYFFTYTPYFFVA, LLSCLLSNVAMAMGAQLIGKF, and FCFGQVLGMLLLDSALYGLVT. The region spanning 530 to 763 is the ABC transporter 1 domain; the sequence is IKIKHLSKVF…YGAGYHMTLV (234 aa). 566 to 573 serves as a coordination point for ATP; sequence GHNGAGKT. An N-linked (GlcNAc...) asparagine glycan is attached at N620. A run of 7 helical transmembrane segments spans residues 925–945, 1100–1120, 1144–1164, 1183–1203, 1213–1233, 1245–1265, and 1310–1330; these read MVAAQVLVPLTCLTLALLAIH, IALNLLIAMAFLASTFSILAV, SALLWDLISFLVPSLLLLVVF, LLLMLYGWAIIPLMYLMSFFF, LTIFNILSGIATFIMVTIMRI, LDHVFLVLPNHCLGMAVSNFY, and MAASGGIYLTLLFLIETNLLW. N1350 carries N-linked (GlcNAc...) asparagine glycosylation. The region spanning 1381–1614 is the ABC transporter 2 domain; the sequence is LIINELSKVY…FGSGYSLQAK (234 aa). 1416 to 1423 is an ATP binding site; it reads GFNGAGKT.

Belongs to the ABC transporter superfamily. ABCA family. Homooligomer; disulfide-linked. In terms of processing, N-glycosylated. Localization at intracellular vesicles is accompanied by processing of oligosaccharide from high mannose type to complex type. N-linked glycosylation at Asn-124 and Asn-140 is required for stability and efficient anterograde trafficking and prevents from proteasomal degradation. Post-translationally, proteolytically cleaved by CTSL and to a lower extent by CTSB within multivesicular bodies (MVB) and lamellar bodies (LB) leading to a mature form of 150 kDa. As to expression, highly expressed in the lung and moderately expressed in the kidney, adipose, macrophage, and spleen.

It is found in the endosome. The protein resides in the multivesicular body membrane. Its subcellular location is the cytoplasmic vesicle membrane. It localises to the late endosome membrane. The protein localises to the lysosome membrane. The catalysed reaction is a 1,2-diacyl-sn-glycero-3-phospho-(1'-sn-glycerol)(in) + ATP + H2O = a 1,2-diacyl-sn-glycero-3-phospho-(1'-sn-glycerol)(out) + ADP + phosphate + H(+). It carries out the reaction a 1,2-diacyl-sn-glycero-3-phosphocholine(in) + ATP + H2O = a 1,2-diacyl-sn-glycero-3-phosphocholine(out) + ADP + phosphate + H(+). It catalyses the reaction ATP + H2O + phospholipidSide 1 = ADP + phosphate + phospholipidSide 2.. The enzyme catalyses ATP + H2O + xenobioticSide 1 = ADP + phosphate + xenobioticSide 2.. The catalysed reaction is 1,2-dihexadecanoyl-sn-glycero-3-phosphocholine(in) + ATP + H2O = 1,2-dihexadecanoyl-sn-glycero-3-phosphocholine(out) + ADP + phosphate + H(+). It carries out the reaction cholesterol(in) + ATP + H2O = cholesterol(out) + ADP + phosphate + H(+). In terms of biological role, catalyzes the ATP-dependent transport of phospholipids such as phosphatidylcholine and phosphoglycerol from the cytoplasm into the lumen side of lamellar bodies, in turn participates in the lamellar bodies biogenesis and homeostasis of pulmonary surfactant. Transports preferentially phosphatidylcholine containing short acyl chains. In addition plays a role as an efflux transporter of miltefosine across macrophage membranes and free cholesterol (FC) through intralumenal vesicles by removing FC from the cell as a component of surfactant and protects cells from free cholesterol toxicity. The sequence is that of Phospholipid-transporting ATPase ABCA3 (Abca3) from Mus musculus (Mouse).